The following is a 423-amino-acid chain: SH2 domain-containing adapter protein F (423 aa).

Disordered stretches follow at residues 1–87, 110–208, and 225–312; these read MQQE…STTR, DPFD…WEWK, and DLPW…GEWT. Acidic residues predominate over residues 192-203; that stretch reads EDDERPPEEYDQ. Phosphotyrosine is present on Y201. The SH2 domain maps to 323–418; it reads WYHGAISRTD…AEHMSLLYPV (96 aa).

Interacts with phosphorylated 'Tyr-720' of PDGFRA via its SH2 domain. In terms of processing, may become phosphorylated upon binding to PDGFRA. In terms of tissue distribution, expressed in skeletal muscle, brain, liver, prostate, testis, ovary, small intestine and colon.

Adapter protein which may play a role in the regulation of apoptosis in response to PDGF. This chain is SH2 domain-containing adapter protein F, found in Homo sapiens (Human).